The sequence spans 307 residues: Oligopeptide transport ATP-binding protein OppF (307 aa).

The 246-residue stretch at 6–251 (VEVKDLEISF…PIHPYTQSLL (246 aa)) folds into the ABC transporter domain. 42 to 49 (GESGSGKT) lines the ATP pocket.

Belongs to the ABC transporter superfamily. In terms of assembly, the complex is composed of two ATP-binding proteins (OppD and OppF), two transmembrane proteins (OppB and OppC) and a solute-binding protein (OppA).

The protein localises to the cell membrane. It carries out the reaction a [peptide](out) + ATP + H2O = a [peptide](in) + ADP + phosphate + H(+). Part of the ABC transporter complex OppABCDF involved in the uptake of oligopeptides. Probably responsible for energy coupling to the transport system. The sequence is that of Oligopeptide transport ATP-binding protein OppF (oppF) from Streptococcus pyogenes serotype M1.